Consider the following 196-residue polypeptide: Rho-related protein racA (196 aa).

GTP is bound by residues A13, G15, K16, T17, C18, Y32, T35, G60, K116, D118, and A159. Residue T17 coordinates Mg(2+). 2 consecutive short sequence motifs (switch) follow at residues 26–37 (NAFPNEYIPTVF) and 57–75 (DTAG…YPQT). T35 is a binding site for Mg(2+). Position 193 is a cysteine methyl ester (C193). C193 is lipidated: S-geranylgeranyl cysteine. The propeptide at 194-196 (LLF) is removed in mature form.

The protein belongs to the small GTPase superfamily. Rho family. As to quaternary structure, interacts (GTP-bound form) with PAK2 (via CRIB domain). The cofactor is Mg(2+).

The protein localises to the cell membrane. The protein resides in the cytoplasm. It is found in the cytoskeleton. The enzyme catalyses GTP + H2O = GDP + phosphate + H(+). Its activity is regulated as follows. Regulated by guanine nucleotide exchange factors (GEFs) which promote the exchange of bound GDP for free GTP, GTPase activating proteins (GAPs) which increase the GTP hydrolysis activity, and GDP dissociation inhibitors which inhibit the dissociation of the nucleotide from the GTPase. Small GTPase which cycles between active GTP-bound and inactive GDP-bound states. Involved in cytoskeleton remodeling. Plays a role in phagocytosis of bacteria and host erythrocytes. Involved in capping of surface receptors. May be involved in cytokinesis. The sequence is that of Rho-related protein racA from Entamoeba histolytica (strain ATCC 30459 / HM-1:IMSS / ABRM).